A 260-amino-acid chain; its full sequence is Transmembrane protein 106C (260 aa).

A lipid anchor (N-myristoyl glycine) is attached at Gly-2. Residues 85 to 105 traverse the membrane as a helical segment; the sequence is YVLLSVLLCLLASGLVFFFLF. Residue Asn-171 is glycosylated (N-linked (GlcNAc...) asparagine). A helical transmembrane segment spans residues 196-216; that stretch reads SYVYFYCTLPAILVHNIVIFM.

Belongs to the TMEM106 family. In terms of assembly, interacts with TMEM106B.

The protein localises to the endoplasmic reticulum membrane. It is found in the membrane. This is Transmembrane protein 106C (Tmem106c) from Rattus norvegicus (Rat).